Here is a 212-residue protein sequence, read N- to C-terminus: Ras-related protein Rab-21 (212 aa).

GTP-binding positions include 14–21 (GEGCVGKT), 62–66 (DTAGQ), and 120–123 (NKCD). Residues 181 to 212 (TNTTGQTTNRSERIPIVPDSDSGNKQPGCCSN) are disordered. Positions 201–212 (DSGNKQPGCCSN) are enriched in polar residues. Residues cysteine 209 and cysteine 210 are each lipidated (S-geranylgeranyl cysteine).

Belongs to the small GTPase superfamily. Rab family. As to quaternary structure, interacts with LIM domain proteins limF and ChLim.

It is found in the cell membrane. Its function is as follows. Involved in the regulation of phagocytosis. This Dictyostelium discoideum (Social amoeba) protein is Ras-related protein Rab-21 (rab21).